The following is a 276-amino-acid chain: MADDYRRSVELERRIFELDNKCATLRTEKPDDDYLQNASSILDKLKTYYRHGGESSSLPKLLQDYTQVVLDITFYEENKLVDQEFPEDSSPFKIQQLLQDLTEPEVLAGRLVPAQEVQSVLGLELLECLYWRRGALLYMYCHTLHQRKQWIKKNKATFLKCLQEGVRYLMRMLQVRNSVKLNDGVVFHDSATANFLAEGIFSDTHLLTMMYIGEMCFWAVKYEDCSMDTTERKEDRLHFRDIGTQILHKYVLACEGPLQGQGWNTENAKEILSILQ.

It belongs to the RIMOC1 family.

The protein resides in the cytoplasm. It is found in the cytosol. Its function is as follows. Plays an important role in the removal of damaged mitochondria via mitophagy by controlling the stability and localization of RAB7A. Required for the recruitment of RAB7A and ATG9A vesicles to damaged mitochondria and promotes the stability of RAB7A by inhibiting its proteasomal degradation during mitophagy. The protein is RAB7A-interacting MON1-CCZ1 complex subunit 1 (rimoc1) of Danio rerio (Zebrafish).